The sequence spans 176 residues: Warthog protein 5 (176 aa).

The first 21 residues, 1–21 (MCSMWLMASWLMAFVAGSTLA), serve as a signal peptide directing secretion. N-linked (GlcNAc...) asparagine glycosylation is present at N70.

Expressed in seam cells, excretory cell, reproductive system, pharynx, pharyngeal-intestinal valve cells, neurons and neuronal support cells.

Its subcellular location is the secreted. Its function is as follows. Intercellular signal essential for a variety of patterning events during development. The sequence is that of Warthog protein 5 (wrt-5) from Caenorhabditis elegans.